A 228-amino-acid polypeptide reads, in one-letter code: Putative L-ribulose-5-phosphate 4-epimerase UlaF (228 aa).

Substrate contacts are provided by residues 26 to 27, 43 to 44, and 72 to 73; these read GN, SG, and SS. D74, H93, and H95 together coordinate Zn(2+). D118 serves as the catalytic Proton donor/acceptor. H167 lines the Zn(2+) pocket. Y225 serves as the catalytic Proton donor/acceptor.

Belongs to the aldolase class II family. AraD/FucA subfamily. Zn(2+) is required as a cofactor.

It catalyses the reaction L-ribulose 5-phosphate = D-xylulose 5-phosphate. It participates in cofactor degradation; L-ascorbate degradation; D-xylulose 5-phosphate from L-ascorbate: step 4/4. In terms of biological role, catalyzes the isomerization of L-ribulose 5-phosphate to D-xylulose 5-phosphate. Is involved in the anaerobic L-ascorbate utilization. The polypeptide is Putative L-ribulose-5-phosphate 4-epimerase UlaF (Shigella boydii serotype 4 (strain Sb227)).